A 215-amino-acid polypeptide reads, in one-letter code: ATP-dependent Clp protease proteolytic subunit (215 aa).

The Nucleophile role is filled by Ser111. The active site involves His136.

The protein belongs to the peptidase S14 family. As to quaternary structure, fourteen ClpP subunits assemble into 2 heptameric rings which stack back to back to give a disk-like structure with a central cavity, resembling the structure of eukaryotic proteasomes.

It localises to the cytoplasm. The enzyme catalyses Hydrolysis of proteins to small peptides in the presence of ATP and magnesium. alpha-casein is the usual test substrate. In the absence of ATP, only oligopeptides shorter than five residues are hydrolyzed (such as succinyl-Leu-Tyr-|-NHMec, and Leu-Tyr-Leu-|-Tyr-Trp, in which cleavage of the -Tyr-|-Leu- and -Tyr-|-Trp bonds also occurs).. Cleaves peptides in various proteins in a process that requires ATP hydrolysis. Has a chymotrypsin-like activity. Plays a major role in the degradation of misfolded proteins. The protein is ATP-dependent Clp protease proteolytic subunit of Hamiltonella defensa subsp. Acyrthosiphon pisum (strain 5AT).